The primary structure comprises 472 residues: Adenosylhomocysteinase (472 aa).

The substrate site is built by Thr-64, Asp-138, and Glu-198. 199–201 is an NAD(+) binding site; the sequence is TTT. Substrate-binding residues include Lys-228 and Asp-232. NAD(+) is bound by residues Asn-233, 262–267, Glu-285, Asn-320, 341–343, and Asn-386; these read GFGDVG and IGH.

It belongs to the adenosylhomocysteinase family. It depends on NAD(+) as a cofactor.

The protein resides in the cytoplasm. The enzyme catalyses S-adenosyl-L-homocysteine + H2O = L-homocysteine + adenosine. It participates in amino-acid biosynthesis; L-homocysteine biosynthesis; L-homocysteine from S-adenosyl-L-homocysteine: step 1/1. May play a key role in the regulation of the intracellular concentration of adenosylhomocysteine. The sequence is that of Adenosylhomocysteinase from Prochlorococcus marinus (strain MIT 9301).